We begin with the raw amino-acid sequence, 360 residues long: MLYALFMQLGSLYHGFYVFQYLTLRGVLATLTALVLSLFIGPFFIARLRRYKIGQMVRNDGPETHLIKQGTPTMGGALILLVVILTTLLWSDLGNPLVWVAVLTTLAFGAIGFVDDWRKLRRQNSKGLSARAKYGLQSLVAFAAGGVLYALASNPVETSLILPFIPHVLIPMGAGFIVFSYFVIVGTSNAVNLTDGLDGLAIVPTVMVAGALGVFAYVSGNAVFARYLDVPWVPGSGQMLIFCGALVGAGLGFLWFNTYPADVFMGDTGALALGAALAIVAIVARQELVLFIMGGVFVVETLSVIIQVVSFRLTGKRVFRMAPLHHHFEKKGWPEPRVAVRFWIITVILVLVGLSSLKIR.

10 consecutive transmembrane segments (helical) span residues glycine 26 to alanine 46, glycine 70 to tryptophan 90, glycine 94 to valine 114, leucine 136 to valine 156, phenylalanine 164 to isoleucine 184, glycine 199 to serine 219, serine 236 to phenylalanine 256, valine 263 to valine 283, valine 289 to valine 309, and alanine 339 to isoleucine 359.

Belongs to the glycosyltransferase 4 family. MraY subfamily. It depends on Mg(2+) as a cofactor.

Its subcellular location is the cell inner membrane. It carries out the reaction UDP-N-acetyl-alpha-D-muramoyl-L-alanyl-gamma-D-glutamyl-meso-2,6-diaminopimeloyl-D-alanyl-D-alanine + di-trans,octa-cis-undecaprenyl phosphate = di-trans,octa-cis-undecaprenyl diphospho-N-acetyl-alpha-D-muramoyl-L-alanyl-D-glutamyl-meso-2,6-diaminopimeloyl-D-alanyl-D-alanine + UMP. Its pathway is cell wall biogenesis; peptidoglycan biosynthesis. Its function is as follows. Catalyzes the initial step of the lipid cycle reactions in the biosynthesis of the cell wall peptidoglycan: transfers peptidoglycan precursor phospho-MurNAc-pentapeptide from UDP-MurNAc-pentapeptide onto the lipid carrier undecaprenyl phosphate, yielding undecaprenyl-pyrophosphoryl-MurNAc-pentapeptide, known as lipid I. This is Phospho-N-acetylmuramoyl-pentapeptide-transferase from Acidithiobacillus ferrooxidans (strain ATCC 23270 / DSM 14882 / CIP 104768 / NCIMB 8455) (Ferrobacillus ferrooxidans (strain ATCC 23270)).